The sequence spans 347 residues: Protein RecA (347 aa).

ATP is bound at residue 67 to 74 (GPESSGKT). The interval 326–347 (DKLLPGRAPSSEAQGTESGQEA) is disordered. Polar residues predominate over residues 336-347 (SEAQGTESGQEA).

The protein belongs to the RecA family.

It localises to the cytoplasm. Functionally, can catalyze the hydrolysis of ATP in the presence of single-stranded DNA, the ATP-dependent uptake of single-stranded DNA by duplex DNA, and the ATP-dependent hybridization of homologous single-stranded DNAs. It interacts with LexA causing its activation and leading to its autocatalytic cleavage. This is Protein RecA from Alkalilimnicola ehrlichii (strain ATCC BAA-1101 / DSM 17681 / MLHE-1).